The primary structure comprises 914 residues: Isoleucine--tRNA ligase (914 aa).

The 'HIGH' region signature appears at 64-74 (PYANGNFHLGH). Glutamate 557 is a binding site for L-isoleucyl-5'-AMP. The 'KMSKS' region motif lies at 598-602 (AMSKS). Lysine 601 contacts ATP. Cysteine 889, cysteine 892, cysteine 906, and cysteine 909 together coordinate Zn(2+).

It belongs to the class-I aminoacyl-tRNA synthetase family. IleS type 1 subfamily. In terms of assembly, monomer. Zn(2+) is required as a cofactor.

It localises to the cytoplasm. It catalyses the reaction tRNA(Ile) + L-isoleucine + ATP = L-isoleucyl-tRNA(Ile) + AMP + diphosphate. Catalyzes the attachment of isoleucine to tRNA(Ile). As IleRS can inadvertently accommodate and process structurally similar amino acids such as valine, to avoid such errors it has two additional distinct tRNA(Ile)-dependent editing activities. One activity is designated as 'pretransfer' editing and involves the hydrolysis of activated Val-AMP. The other activity is designated 'posttransfer' editing and involves deacylation of mischarged Val-tRNA(Ile). The protein is Isoleucine--tRNA ligase of Leptospira borgpetersenii serovar Hardjo-bovis (strain JB197).